The primary structure comprises 155 residues: uncharacterized protein (155 aa).

It belongs to the IIV-6 145L family.

This is an uncharacterized protein from Acheta domesticus (House cricket).